The chain runs to 123 residues: Ribosome-binding factor A (123 aa).

It belongs to the RbfA family. As to quaternary structure, monomer. Binds 30S ribosomal subunits, but not 50S ribosomal subunits or 70S ribosomes.

Its subcellular location is the cytoplasm. Functionally, one of several proteins that assist in the late maturation steps of the functional core of the 30S ribosomal subunit. Associates with free 30S ribosomal subunits (but not with 30S subunits that are part of 70S ribosomes or polysomes). Required for efficient processing of 16S rRNA. May interact with the 5'-terminal helix region of 16S rRNA. The sequence is that of Ribosome-binding factor A from Delftia acidovorans (strain DSM 14801 / SPH-1).